The following is a 100-amino-acid chain: Small ribosomal subunit protein uS14c (100 aa).

This sequence belongs to the universal ribosomal protein uS14 family. Part of the 30S ribosomal subunit.

It is found in the plastid. It localises to the chloroplast. In terms of biological role, binds 16S rRNA, required for the assembly of 30S particles. In Psilotum nudum (Whisk fern), this protein is Small ribosomal subunit protein uS14c.